Consider the following 390-residue polypeptide: Homoserine O-succinyltransferase (390 aa).

Residues Asn-56–Leu-365 enclose the AB hydrolase-1 domain. Ser-162 acts as the Nucleophile in catalysis. Arg-232 lines the substrate pocket. Residues Asp-327 and His-360 contribute to the active site. Substrate is bound at residue Asp-361.

This sequence belongs to the AB hydrolase superfamily. MetX family. As to quaternary structure, homodimer.

Its subcellular location is the cytoplasm. It catalyses the reaction L-homoserine + succinyl-CoA = O-succinyl-L-homoserine + CoA. It participates in amino-acid biosynthesis; L-methionine biosynthesis via de novo pathway; O-succinyl-L-homoserine from L-homoserine: step 1/1. Transfers a succinyl group from succinyl-CoA to L-homoserine, forming succinyl-L-homoserine. In vitro, also has serine succinyl transferase activity. This Litchfieldella anticariensis (strain DSM 16096 / CECT 5854 / CIP 108499 / LMG 22089 / FP35) (Halomonas anticariensis) protein is Homoserine O-succinyltransferase.